The chain runs to 472 residues: Phosphoenolpyruvate carboxykinase (ATP), glycosomal (472 aa).

221-228 (GLSGTGKT) is a binding site for ATP.

It belongs to the phosphoenolpyruvate carboxykinase (ATP) family. Homodimer.

The protein localises to the glycosome. The enzyme catalyses oxaloacetate + ATP = phosphoenolpyruvate + ADP + CO2. Its pathway is carbohydrate biosynthesis; gluconeogenesis. Functionally, P60 has the capability to bind to microtubules and membrane vesicles in vitro. This Trypanosoma brucei brucei protein is Phosphoenolpyruvate carboxykinase (ATP), glycosomal.